The sequence spans 392 residues: MRGRTMSVIKMTDLELAGKRVFIRADLNVPVKDGKVTSDARILASLPTIKRCLEAGAKVMVTSHLGRPTEGEYNEEFSLAPVVNYLNDALDCDVKLAKDYLDGIELNAGELVVLENVRFNKGEKKNDEALSKKYAALCDIFVMDAFGTAHRAQASTHGVGMNAAIACAGPLLANELEALGKAMDNPARPLVAIVGGSKVSTKLTVLESLSKIADQLVVGGGIANTFIAAEGHNVGKSLYEADLVETAKKLMKDCAIPVATDVACAKAFDENAEAVIKHVSEVQDDDMIFDLGPDSTAVLAEIISNAKTILWNGPVGVFEFKNFEAGTAGIAKAIADSEGFSVAGGGDTLAAIDKFGIKADVSYISTGGGAFLEFVEGKVLPAVAMLEERAKA.

Substrate-binding positions include 26–28 (DLN), Arg41, 64–67 (HLGR), Arg118, and Arg151. ATP contacts are provided by residues Lys202, Glu319, and 345–348 (GGDT).

Belongs to the phosphoglycerate kinase family. Monomer.

Its subcellular location is the cytoplasm. It carries out the reaction (2R)-3-phosphoglycerate + ATP = (2R)-3-phospho-glyceroyl phosphate + ADP. It participates in carbohydrate degradation; glycolysis; pyruvate from D-glyceraldehyde 3-phosphate: step 2/5. This Photobacterium profundum (strain SS9) protein is Phosphoglycerate kinase.